We begin with the raw amino-acid sequence, 357 residues long: (4E)-oxalomesaconate Delta-isomerase (357 aa).

This sequence belongs to the PrpF family.

The enzyme catalyses (1E)-4-oxobut-1-ene-1,2,4-tricarboxylate = (3Z)-2-oxo-4-carboxy-3-hexenedioate. Its pathway is secondary metabolite metabolism; lignin degradation. Contributes to the degradation of lignin at the level of the protocatechuate 4,5-cleavage pathway. Catalyzes the isomerization of the double bond between C4 and C5 in (4E)-oxalomesaconate (OMA) to (3Z)-2-keto-4-carboxy-3-hexenedioate (KCH), where the double bond has migrated between C3 and C4 via a 1,3-allylic isomerization. This is (4E)-oxalomesaconate Delta-isomerase from Novosphingobium sp. (strain KA1) (Sphingomonas sp. (strain KA1)).